Consider the following 316-residue polypeptide: Phospholipase A1 4 (316 aa).

The signal sequence occupies residues 1 to 4; it reads ADDL. Positions 5-14 are excised as a propeptide; it reads TTLRNGTLDR. The cysteines at positions 20 and 103 are disulfide-linked. Serine 153 (nucleophile) is an active-site residue. Residue aspartate 181 is the Charge relay system of the active site. Cystine bridges form between cysteine 192-cysteine 197 and cysteine 235-cysteine 240. Histidine 242 serves as the catalytic Charge relay system. Intrachain disulfides connect cysteine 257-cysteine 284, cysteine 258-cysteine 309, and cysteine 277-cysteine 282.

Belongs to the AB hydrolase superfamily. Lipase family. As to expression, expressed by the venom gland.

It is found in the secreted. The catalysed reaction is a 1,2-diacyl-sn-glycero-3-phosphocholine + H2O = a 2-acyl-sn-glycero-3-phosphocholine + a fatty acid + H(+). Catalyzes the hydrolysis of phosphatidylcholine with phospholipase A1 activity. May act as an allergen and induce hemolytic activity. This is Phospholipase A1 4 from Polistes dominula (European paper wasp).